Reading from the N-terminus, the 417-residue chain is Probable secreted aspartic protease ARB_07536 (417 aa).

An N-terminal signal peptide occupies residues 1-20; sequence MRGILILVALGAATIPQASA. Residues 42–413 form the Peptidase A1 domain; it reads NTDLVTIGTP…DFEKNRVGLA (372 aa). Asn74, Asn91, Asn100, Asn170, Asn276, and Asn314 each carry an N-linked (GlcNAc...) asparagine glycan. Cysteines 333 and 373 form a disulfide.

Belongs to the peptidase A1 family.

The protein localises to the secreted. Probable secreted aspartic protease that supplies the fungus with nutrient amino acids. May be able to degrade the selected host's proteins involved in the immune defense. This is Probable secreted aspartic protease ARB_07536 from Arthroderma benhamiae (strain ATCC MYA-4681 / CBS 112371) (Trichophyton mentagrophytes).